Consider the following 203-residue polypeptide: MKSRNGPLRVGIGGPVGSGKTALTEKLCKAMRDDYSVAVVTNDIYTTEDAEALVRMQALTSDRIVGVETGGCPHTAIREDATINLQAIAGLNERLPDLDVVFIESGGDNLAATFSPDLADITIYVISVCQGEEIPRKGGPGITKSDLLVINKKDLAPFVDVDLDVMDRDATRMRQARPFVFSDMKRGDGVGTIVDFLKEQGGL.

GTP is bound at residue 14 to 21 (GPVGSGKT).

It belongs to the SIMIBI class G3E GTPase family. UreG subfamily. In terms of assembly, homodimer. UreD, UreF and UreG form a complex that acts as a GTP-hydrolysis-dependent molecular chaperone, activating the urease apoprotein by helping to assemble the nickel containing metallocenter of UreC. The UreE protein probably delivers the nickel.

The protein localises to the cytoplasm. Its function is as follows. Facilitates the functional incorporation of the urease nickel metallocenter. This process requires GTP hydrolysis, probably effectuated by UreG. This is Urease accessory protein UreG from Rhizobium rhizogenes (strain K84 / ATCC BAA-868) (Agrobacterium radiobacter).